The sequence spans 182 residues: Inner membrane assembly complex subunit 17 (182 aa).

The transit peptide at 1 to 45 (MLKRRSNALITLSRTKLFPITTVAYYHRRLLNQQRRAVSTSPKKE) directs the protein to the mitochondrion. Topologically, residues 46–107 (IKSLEDLANL…EIPVKRFIRP (62 aa)) are mitochondrial matrix. A helical membrane pass occupies residues 108 to 127 (LWMFILMGSSVYLLLHFSWW). Residues 128 to 158 (KLEHEERESQLKKEVEILEHQLNELIIQDKT) are a coiled coil. Residues 128-182 (KLEHEERESQLKKEVEILEHQLNELIIQDKTHNTSRGKGSNESTHMKPWYRRWFW) lie on the Mitochondrial intermembrane side of the membrane.

This sequence belongs to the INA17 family. In terms of assembly, component of the inner membrane assembly (INA) complex, composed of INA17 and INA22. Interacts with a subset of F(1)F(0)-ATP synthase subunits of the F(1)-domain and the peripheral stalk.

The protein localises to the mitochondrion inner membrane. In terms of biological role, component of the INA complex (INAC) that promotes the biogenesis of mitochondrial F(1)F(0)-ATP synthase. INAC facilitates the assembly of the peripheral stalk and promotes the assembly of the catalytic F(1)-domain with the membrane-embedded F(0)-domain. This is Inner membrane assembly complex subunit 17 from Saccharomyces cerevisiae (strain YJM789) (Baker's yeast).